The primary structure comprises 363 residues: Dihydroorotate dehydrogenase (quinone) (363 aa).

Residues 67 to 71 (AGYDK) and Thr91 each bind FMN. Lys71 contributes to the substrate binding site. Residue 116 to 120 (NRMGF) participates in substrate binding. The FMN site is built by Asn145 and Asn178. Asn178 lines the substrate pocket. Ser181 acts as the Nucleophile in catalysis. Residue Asn183 participates in substrate binding. The FMN site is built by Lys224 and Thr254. 255–256 (NT) is a substrate binding site. Residues Gly275, Gly304, and 325–326 (YS) contribute to the FMN site.

Belongs to the dihydroorotate dehydrogenase family. Type 2 subfamily. As to quaternary structure, monomer. It depends on FMN as a cofactor.

It localises to the cell membrane. The enzyme catalyses (S)-dihydroorotate + a quinone = orotate + a quinol. It participates in pyrimidine metabolism; UMP biosynthesis via de novo pathway; orotate from (S)-dihydroorotate (quinone route): step 1/1. Catalyzes the conversion of dihydroorotate to orotate with quinone as electron acceptor. The polypeptide is Dihydroorotate dehydrogenase (quinone) (Acidithiobacillus ferrooxidans (strain ATCC 23270 / DSM 14882 / CIP 104768 / NCIMB 8455) (Ferrobacillus ferrooxidans (strain ATCC 23270))).